Here is a 779-residue protein sequence, read N- to C-terminus: Protein zer-1 homolog (779 aa).

Ala2 is modified (N-acetylalanine). 3 LRR repeats span residues 226-245 (SLVL…IVQL), 246-281 (HKLR…KLTR), and 291-315 (LGNL…KTDE). ARM repeat units follow at residues 440-480 (RSEQ…NFSI), 524-569 (DNDH…NITD), 571-613 (TPDN…NVAE), 615-656 (KELR…HIMF), and 727-769 (PDKY…HCSN).

Belongs to the zyg-11 family. Interacts with the ELOC-ELOB/Elongin BC complex. Part of an E3 ubiquitin ligase complex including ZER1, CUL2 and Elongin BC.

Functionally, serves as substrate adapter subunit in the E3 ubiquitin ligase complex ZYG11B-CUL2-Elongin BC. Acts redudantly with ZYG11B to target substrates bearing N-terminal glycine degrons for proteasomal degradation. Involved in the clearance of proteolytic fragments generated by caspase cleavage during apoptosis since N-terminal glycine degrons are strongly enriched at caspase cleavage sites. Also important in the quality control of protein N-myristoylation in which N-terminal glycine degrons are conditionally exposed after a failure of N-myristoylation. The chain is Protein zer-1 homolog from Mus musculus (Mouse).